Consider the following 370-residue polypeptide: 3-dehydroquinate synthase (370 aa).

NAD(+) is bound by residues 107–111 (GVIGD), 131–132 (TS), lysine 144, and lysine 153. Positions 186, 249, and 267 each coordinate Zn(2+).

Belongs to the sugar phosphate cyclases superfamily. Dehydroquinate synthase family. Requires Co(2+) as cofactor. The cofactor is Zn(2+). NAD(+) is required as a cofactor.

Its subcellular location is the cytoplasm. The catalysed reaction is 7-phospho-2-dehydro-3-deoxy-D-arabino-heptonate = 3-dehydroquinate + phosphate. The protein operates within metabolic intermediate biosynthesis; chorismate biosynthesis; chorismate from D-erythrose 4-phosphate and phosphoenolpyruvate: step 2/7. Catalyzes the conversion of 3-deoxy-D-arabino-heptulosonate 7-phosphate (DAHP) to dehydroquinate (DHQ). This is 3-dehydroquinate synthase from Ruegeria pomeroyi (strain ATCC 700808 / DSM 15171 / DSS-3) (Silicibacter pomeroyi).